The following is a 455-amino-acid chain: UDP-N-acetylmuramoylalanine--D-glutamate ligase (455 aa).

Residue 119–125 participates in ATP binding; the sequence is GTNGKTT.

Belongs to the MurCDEF family.

It localises to the cytoplasm. It carries out the reaction UDP-N-acetyl-alpha-D-muramoyl-L-alanine + D-glutamate + ATP = UDP-N-acetyl-alpha-D-muramoyl-L-alanyl-D-glutamate + ADP + phosphate + H(+). Its pathway is cell wall biogenesis; peptidoglycan biosynthesis. Functionally, cell wall formation. Catalyzes the addition of glutamate to the nucleotide precursor UDP-N-acetylmuramoyl-L-alanine (UMA). In Listeria monocytogenes serotype 4b (strain F2365), this protein is UDP-N-acetylmuramoylalanine--D-glutamate ligase.